The primary structure comprises 109 residues: Iron-sulfur cluster assembly protein CyaY (109 aa).

It belongs to the frataxin family.

Functionally, involved in iron-sulfur (Fe-S) cluster assembly. May act as a regulator of Fe-S biogenesis. This is Iron-sulfur cluster assembly protein CyaY from Acidovorax ebreus (strain TPSY) (Diaphorobacter sp. (strain TPSY)).